The sequence spans 283 residues: Polyamine aminopropyltransferase (283 aa).

The region spanning 5-238 (TTWIDEYHKG…GIWSWTFASS (234 aa)) is the PABS domain. Residue Gln32 coordinates S-methyl-5'-thioadenosine. Positions 63 and 87 each coordinate spermidine. S-methyl-5'-thioadenosine-binding positions include Glu107 and 139–140 (DG). Asp158 serves as the catalytic Proton acceptor. 158–161 (DSSD) contacts spermidine.

The protein belongs to the spermidine/spermine synthase family. Homodimer or homotetramer.

Its subcellular location is the cytoplasm. The enzyme catalyses S-adenosyl 3-(methylsulfanyl)propylamine + putrescine = S-methyl-5'-thioadenosine + spermidine + H(+). Its pathway is amine and polyamine biosynthesis; spermidine biosynthesis; spermidine from putrescine: step 1/1. Catalyzes the irreversible transfer of a propylamine group from the amino donor S-adenosylmethioninamine (decarboxy-AdoMet) to putrescine (1,4-diaminobutane) to yield spermidine. This chain is Polyamine aminopropyltransferase, found in Prochlorococcus marinus (strain MIT 9215).